The sequence spans 131 residues: Profilin (131 aa).

Belongs to the profilin family. Occurs in many kinds of cells as a complex with monomeric actin in a 1:1 ratio.

It is found in the cytoplasm. It localises to the cytoskeleton. Binds to actin and affects the structure of the cytoskeleton. At high concentrations, profilin prevents the polymerization of actin, whereas it enhances it at low concentrations. Has a high affinity for poly-proline. In Citrullus lanatus (Watermelon), this protein is Profilin.